Reading from the N-terminus, the 291-residue chain is Diaminopimelate epimerase (291 aa).

Residues Asn13, Gln46, and Asn66 each contribute to the substrate site. Cys75 functions as the Proton donor in the catalytic mechanism. Substrate-binding positions include Gly76–Asn77, Asn156, Asn189, and Glu207–Arg208. The active-site Proton acceptor is Cys216. Gly217–Ser218 contacts substrate.

This sequence belongs to the diaminopimelate epimerase family. In terms of assembly, homodimer.

It is found in the cytoplasm. The catalysed reaction is (2S,6S)-2,6-diaminopimelate = meso-2,6-diaminopimelate. It functions in the pathway amino-acid biosynthesis; L-lysine biosynthesis via DAP pathway; DL-2,6-diaminopimelate from LL-2,6-diaminopimelate: step 1/1. Its function is as follows. Catalyzes the stereoinversion of LL-2,6-diaminopimelate (L,L-DAP) to meso-diaminopimelate (meso-DAP), a precursor of L-lysine and an essential component of the bacterial peptidoglycan. This chain is Diaminopimelate epimerase, found in Rhodospirillum centenum (strain ATCC 51521 / SW).